Consider the following 305-residue polypeptide: Transcription factor bHLH18 (305 aa).

The interval 41-67 is disordered; the sequence is LKTTHISPNLHPFSSSNPPPPKHQPSS. The segment covering 44–56 has biased composition (polar residues); the sequence is THISPNLHPFSSS. Positions 122 to 171 constitute a bHLH domain; it reads SNAQDHILAERKRREKLTQRFVALSALIPGLKKMDKASVLGDAIKHIKYL. A disordered region spans residues 201 to 224; that stretch reads DENHQPSSSSSSDGNRNSSSSNLP. Residues 207-222 show a composition bias toward low complexity; it reads SSSSSSDGNRNSSSSN.

Homodimer. Expressed in roots.

It localises to the nucleus. In Arabidopsis thaliana (Mouse-ear cress), this protein is Transcription factor bHLH18 (BHLH18).